Reading from the N-terminus, the 91-residue chain is MEIFNDLSRKLVFPIDYPSQRRVAKLTDIILGSGTLVSCLLGFYAGSLSLTLYAFAAAYGLALLLVVPAYGKYRQQKLAWVGSAAATTKDL.

At 1-28 (MEIFNDLSRKLVFPIDYPSQRRVAKLTD) the chain is on the cytoplasmic side. A helical membrane pass occupies residues 29–48 (IILGSGTLVSCLLGFYAGSL). The Lumenal segment spans residues 49-51 (SLT). A helical membrane pass occupies residues 52-71 (LYAFAAAYGLALLLVVPAYG). Residues 72-91 (KYRQQKLAWVGSAAATTKDL) lie on the Cytoplasmic side of the membrane.

It belongs to the SPCS1 family. Component of the signal peptidase complex (SPC) composed of a catalytic subunit SEC11 and three accessory subunits SPC1, SPC2 and SPC3. The complex induces a local thinning of the ER membrane which is used to measure the length of the signal peptide (SP) h-region of protein substrates. This ensures the selectivity of the complex towards h-regions shorter than 18-20 amino acids. SPC associates with the translocon complex.

The protein resides in the endoplasmic reticulum membrane. Functionally, component of the signal peptidase complex (SPC) which catalyzes the cleavage of N-terminal signal sequences from nascent proteins as they are translocated into the lumen of the endoplasmic reticulum. Dispensable for SPC enzymatic activity. The chain is Signal peptidase complex subunit 1 (SPC1) from Eremothecium gossypii (strain ATCC 10895 / CBS 109.51 / FGSC 9923 / NRRL Y-1056) (Yeast).